A 135-amino-acid chain; its full sequence is MARPDMGGPKMGGGFGGPRSGGFGGGGGGGGFGGGGFGGGRGGDRGDRGDRDDRGGDEGGGRRGFGRRKVCRFCADKTLKVDYKDQGQMKYFLTERGKIIPRRISGNCAKHQREVATAIKRGRMLAILPYTVGQM.

A disordered region spans residues 1–65; that stretch reads MARPDMGGPK…GDEGGGRRGF (65 aa). Residues 9 to 41 show a composition bias toward gly residues; that stretch reads PKMGGGFGGPRSGGFGGGGGGGGFGGGGFGGGR. Residues 42 to 61 are compositionally biased toward basic and acidic residues; sequence GGDRGDRGDRDDRGGDEGGG.

The protein belongs to the bacterial ribosomal protein bS18 family. In terms of assembly, part of the 30S ribosomal subunit. Forms a tight heterodimer with protein bS6.

In terms of biological role, binds as a heterodimer with protein bS6 to the central domain of the 16S rRNA, where it helps stabilize the platform of the 30S subunit. The sequence is that of Small ribosomal subunit protein bS18 from Anaeromyxobacter dehalogenans (strain 2CP-C).